We begin with the raw amino-acid sequence, 209 residues long: Uracil phosphoribosyltransferase (209 aa).

Residues Arg77, Arg102, and 129 to 137 (DPMLATGVS) each bind 5-phospho-alpha-D-ribose 1-diphosphate. Uracil contacts are provided by residues Ile192 and 197 to 199 (GDA). 5-phospho-alpha-D-ribose 1-diphosphate is bound at residue Asp198.

Belongs to the UPRTase family. Requires Mg(2+) as cofactor.

It catalyses the reaction UMP + diphosphate = 5-phospho-alpha-D-ribose 1-diphosphate + uracil. The protein operates within pyrimidine metabolism; UMP biosynthesis via salvage pathway; UMP from uracil: step 1/1. Allosterically activated by GTP. In terms of biological role, catalyzes the conversion of uracil and 5-phospho-alpha-D-ribose 1-diphosphate (PRPP) to UMP and diphosphate. The polypeptide is Uracil phosphoribosyltransferase (Metamycoplasma arthritidis (strain 158L3-1) (Mycoplasma arthritidis)).